The primary structure comprises 122 residues: Large ribosomal subunit protein uL14 (122 aa).

This sequence belongs to the universal ribosomal protein uL14 family. Part of the 50S ribosomal subunit. Forms a cluster with proteins L3 and L19. In the 70S ribosome, L14 and L19 interact and together make contacts with the 16S rRNA in bridges B5 and B8.

In terms of biological role, binds to 23S rRNA. Forms part of two intersubunit bridges in the 70S ribosome. The chain is Large ribosomal subunit protein uL14 from Thermomicrobium roseum (strain ATCC 27502 / DSM 5159 / P-2).